A 214-amino-acid polypeptide reads, in one-letter code: Ribosomal RNA small subunit methyltransferase G (214 aa).

Residues G81, M86, 132 to 133 (VE), and R147 each bind S-adenosyl-L-methionine.

Belongs to the methyltransferase superfamily. RNA methyltransferase RsmG family.

It is found in the cytoplasm. The enzyme catalyses guanosine(527) in 16S rRNA + S-adenosyl-L-methionine = N(7)-methylguanosine(527) in 16S rRNA + S-adenosyl-L-homocysteine. Its function is as follows. Specifically methylates the N7 position of guanine in position 527 of 16S rRNA. The chain is Ribosomal RNA small subunit methyltransferase G from Pseudomonas fluorescens (strain Pf0-1).